Consider the following 517-residue polypeptide: Crotonobetaine/carnitine--CoA ligase (517 aa).

This sequence belongs to the ATP-dependent AMP-binding enzyme family.

The catalysed reaction is 4-(trimethylamino)butanoate + ATP + CoA = 4-(trimethylamino)butanoyl-CoA + AMP + diphosphate. It carries out the reaction crotonobetaine + ATP + CoA = crotonobetainyl-CoA + AMP + diphosphate. The enzyme catalyses (R)-carnitine + ATP + CoA = (R)-carnitinyl-CoA + AMP + diphosphate. Its pathway is amine and polyamine metabolism; carnitine metabolism. Functionally, catalyzes the transfer of CoA to carnitine, generating the initial carnitinyl-CoA needed for the CaiB reaction cycle. Also has activity toward crotonobetaine and gamma-butyrobetaine. The chain is Crotonobetaine/carnitine--CoA ligase from Escherichia coli O139:H28 (strain E24377A / ETEC).